Consider the following 360-residue polypeptide: Peptide chain release factor 1 (360 aa).

Gln235 carries the N5-methylglutamine modification. A compositionally biased stretch (basic and acidic residues) spans 284-293 (QRRQQEESST). Residues 284 to 311 (QRRQQEESSTRRNLLGSGDRSDRIRTYN) form a disordered region.

This sequence belongs to the prokaryotic/mitochondrial release factor family. Methylated by PrmC. Methylation increases the termination efficiency of RF1.

It is found in the cytoplasm. Its function is as follows. Peptide chain release factor 1 directs the termination of translation in response to the peptide chain termination codons UAG and UAA. In Sodalis glossinidius (strain morsitans), this protein is Peptide chain release factor 1.